The chain runs to 269 residues: MGQEDLMNRAEDVADQFLRVTKQYLPHLARLCLISTFLEDGIRMWFQWNEQRDYIEATWSCGYFLATCFVLLNLIGQLGGCVLILSRNFVQYACFGLFGIIALQTVAYSILWDLKFLMRNLALGGGLLLLLAESRSEGKSMFAGVPSMGESSPKQYMQLGGRVLLVLMFMTLLHFDFNFFSILQNLVGTALIILVAIGFKTKLAALTLVLWLLVINVYFNAFWTIPAYKPMHDFLKYDFFQTTSVIGGLLLVVALGPGGVSMDEKKKEW.

Transmembrane regions (helical) follow at residues 64-84, 92-112, 179-199, 203-223, and 242-262; these read FLAT…CVLI, YACF…SILW, FFSI…AIGF, LAAL…NAFW, and TTSV…GVSM. Residues 266 to 269 carry the Di-lysine motif motif; sequence KKEW.

The protein belongs to the SURF4 family.

The protein localises to the endoplasmic reticulum membrane. Its subcellular location is the endoplasmic reticulum-Golgi intermediate compartment membrane. The protein resides in the golgi apparatus membrane. In terms of biological role, endoplasmic reticulum cargo receptor that mediates the export of lipoproteins by recruiting cargos into COPII vesicles to facilitate their secretion. Acts as a cargo receptor for lipoproteins bearing both APOB and APOA1, thereby regulating lipoprotein delivery and the maintenance of lipid homeostasis. This chain is Surfeit locus protein 4, found in Takifugu rubripes (Japanese pufferfish).